We begin with the raw amino-acid sequence, 715 residues long: Polyribonucleotide nucleotidyltransferase (715 aa).

Residues Asp493 and Asp499 each contribute to the Mg(2+) site. Residues 560–619 (PRMITVKINPEKIRDVIGKGGSVIRALTEETGTTIDISDDGVVTIASTSSEGMAEAKKRI) enclose the KH domain. The S1 motif domain occupies 629 to 697 (GQVYEGTVLK…EKGRVRLSAK (69 aa)).

It belongs to the polyribonucleotide nucleotidyltransferase family. Mg(2+) serves as cofactor.

It is found in the cytoplasm. It carries out the reaction RNA(n+1) + phosphate = RNA(n) + a ribonucleoside 5'-diphosphate. Its function is as follows. Involved in mRNA degradation. Catalyzes the phosphorolysis of single-stranded polyribonucleotides processively in the 3'- to 5'-direction. This chain is Polyribonucleotide nucleotidyltransferase, found in Burkholderia orbicola (strain MC0-3).